The sequence spans 448 residues: Phosphoglucosamine mutase (448 aa).

The Phosphoserine intermediate role is filled by Ser101. Mg(2+)-binding residues include Ser101, Asp242, Asp244, and Asp246. Ser101 carries the phosphoserine modification.

This sequence belongs to the phosphohexose mutase family. The cofactor is Mg(2+). Post-translationally, activated by phosphorylation.

It carries out the reaction alpha-D-glucosamine 1-phosphate = D-glucosamine 6-phosphate. In terms of biological role, catalyzes the conversion of glucosamine-6-phosphate to glucosamine-1-phosphate. This Nitrobacter winogradskyi (strain ATCC 25391 / DSM 10237 / CIP 104748 / NCIMB 11846 / Nb-255) protein is Phosphoglucosamine mutase.